Here is a 243-residue protein sequence, read N- to C-terminus: 2,3-bisphosphoglycerate-dependent phosphoglycerate mutase (243 aa).

Substrate is bound by residues 8–15 (RHGQSEWN), 21–22 (TG), R60, 87–90 (ERHY), K98, 114–115 (RR), and 183–184 (GN). H9 acts as the Tele-phosphohistidine intermediate in catalysis. Catalysis depends on E87, which acts as the Proton donor/acceptor.

It belongs to the phosphoglycerate mutase family. BPG-dependent PGAM subfamily. As to quaternary structure, homodimer.

It catalyses the reaction (2R)-2-phosphoglycerate = (2R)-3-phosphoglycerate. It participates in carbohydrate degradation; glycolysis; pyruvate from D-glyceraldehyde 3-phosphate: step 3/5. In terms of biological role, catalyzes the interconversion of 2-phosphoglycerate and 3-phosphoglycerate. In Maricaulis maris (strain MCS10) (Caulobacter maris), this protein is 2,3-bisphosphoglycerate-dependent phosphoglycerate mutase.